The chain runs to 38 residues: IFINVKCSSPQQCLKPCKKAFGQHAGGKCINGKCKCYP.

Cystine bridges form between Cys7/Cys29, Cys13/Cys34, and Cys17/Cys36.

Belongs to the short scorpion toxin superfamily. Potassium channel inhibitor family. Alpha-KTx 02 subfamily. In terms of tissue distribution, expressed by the venom gland.

It localises to the secreted. Blocks human voltage-gated potassium channels Kv1.2/KCNA2 (IC(50)=0.3 nM), Kv1.3/KCNA3 (IC(50)=8.3 nM) and Shaker IR (with inactivation domain removed) (IC(50)=12 nM) and blocks intermediate conductance calcium-activated potassium channel KCa3.1/KCNN4 (IC(50)=6.4 nM). The chain is Potassium channel toxin alpha-KTx 2.15 from Centruroides tecomanus (Scorpion).